Consider the following 409-residue polypeptide: Arginine deiminase (409 aa).

C399 serves as the catalytic Amidino-cysteine intermediate.

It belongs to the arginine deiminase family.

The protein resides in the cytoplasm. The enzyme catalyses L-arginine + H2O = L-citrulline + NH4(+). Its pathway is amino-acid degradation; L-arginine degradation via ADI pathway; carbamoyl phosphate from L-arginine: step 1/2. This Streptococcus pneumoniae (strain 70585) protein is Arginine deiminase.